The primary structure comprises 380 residues: Cyclohexane-1-carbonyl-CoA dehydrogenase (380 aa).

Belongs to the acyl-CoA dehydrogenase family. In terms of assembly, homotetramer. It depends on FAD as a cofactor.

It carries out the reaction cyclohexane-1-carbonyl-CoA + oxidized [electron-transfer flavoprotein] + H(+) = cyclohex-1-ene-1-carbonyl-CoA + reduced [electron-transfer flavoprotein]. In terms of biological role, acyl-CoA dehydrogenase involved in the anaerobic degradation of cyclohexane carboxylic acid (CHC). Catalyzes the 1,2-dehydrogenation of cyclohexane-1-carbonyl-CoA (CHCoA) to cyclohex-1-ene-1-carbonyl-CoA (CHeneCoA). An alternative substrate, cyclohex-3-ene-1-carboxyl-CoA can be converted to the corresponding cyclohexadiene-1-carboxyl-CoA isomers (30% rate compared to CHC). This chain is Cyclohexane-1-carbonyl-CoA dehydrogenase, found in Geobacter metallireducens (strain ATCC 53774 / DSM 7210 / GS-15).